The sequence spans 354 residues: Fructose-bisphosphate aldolase (354 aa).

Position 61 (serine 61) interacts with D-glyceraldehyde 3-phosphate. Residue aspartate 104 is the Proton donor of the active site. Positions 105, 139, 169, and 221 each coordinate Zn(2+). Glycine 222 lines the dihydroxyacetone phosphate pocket. Histidine 260 is a Zn(2+) binding site. Residues 261–263 and 282–285 contribute to the dihydroxyacetone phosphate site; these read GGS and NIDT.

The protein belongs to the class II fructose-bisphosphate aldolase family. In terms of assembly, homodimer. It depends on Zn(2+) as a cofactor.

It catalyses the reaction beta-D-fructose 1,6-bisphosphate = D-glyceraldehyde 3-phosphate + dihydroxyacetone phosphate. It functions in the pathway carbohydrate degradation; glycolysis; D-glyceraldehyde 3-phosphate and glycerone phosphate from D-glucose: step 4/4. Functionally, catalyzes the aldol condensation of dihydroxyacetone phosphate (DHAP or glycerone-phosphate) with glyceraldehyde 3-phosphate (G3P) to form fructose 1,6-bisphosphate (FBP) in gluconeogenesis and the reverse reaction in glycolysis. The polypeptide is Fructose-bisphosphate aldolase (fba) (Campylobacter jejuni subsp. jejuni serotype O:2 (strain ATCC 700819 / NCTC 11168)).